A 387-amino-acid polypeptide reads, in one-letter code: Alkanesulfonate monooxygenase (387 aa).

The protein belongs to the SsuD family.

The enzyme catalyses an alkanesulfonate + FMNH2 + O2 = an aldehyde + FMN + sulfite + H2O + 2 H(+). Functionally, catalyzes the desulfonation of aliphatic sulfonates. This chain is Alkanesulfonate monooxygenase, found in Xanthomonas axonopodis pv. citri (strain 306).